We begin with the raw amino-acid sequence, 293 residues long: Probable rRNA-processing protein EBP2 homolog (293 aa).

Residues 1–37 (MSLEEDIVSDDEMNMIDEDDATDSEAESLSDSDTENE) show a composition bias toward acidic residues. Disordered regions lie at residues 1–45 (MSLE…LAEP) and 150–293 (IEES…RQKR). The stretch at 135–190 (HMEKVKSRLLHEKKQIEESEERRKARDNKRMAKEVQSQKMKERAKEKKDNIESVKK) forms a coiled coil. Basic and acidic residues-rich tracts occupy residues 150-167 (IEES…RMAK), 173-189 (KMKE…ESVK), and 247-256 (KKREFRDSKF). The segment covering 265–275 (SKQNTAETTND) has biased composition (polar residues).

It belongs to the EBP2 family. As to quaternary structure, interacts with NSN1.

It is found in the nucleus. Its subcellular location is the nucleolus. Required for the processing of the 27S pre-rRNA. Plays an important role in plant growth and senescence by modulating ribosome biogenesis in nucleolus. Associates with ribosomes. The protein is Probable rRNA-processing protein EBP2 homolog of Arabidopsis thaliana (Mouse-ear cress).